Reading from the N-terminus, the 360-residue chain is Histidinol-phosphate aminotransferase (360 aa).

Lysine 223 carries the post-translational modification N6-(pyridoxal phosphate)lysine.

Belongs to the class-II pyridoxal-phosphate-dependent aminotransferase family. Histidinol-phosphate aminotransferase subfamily. In terms of assembly, homodimer. Pyridoxal 5'-phosphate is required as a cofactor.

The enzyme catalyses L-histidinol phosphate + 2-oxoglutarate = 3-(imidazol-4-yl)-2-oxopropyl phosphate + L-glutamate. It functions in the pathway amino-acid biosynthesis; L-histidine biosynthesis; L-histidine from 5-phospho-alpha-D-ribose 1-diphosphate: step 7/9. This chain is Histidinol-phosphate aminotransferase, found in Bacillus subtilis subsp. natto.